The sequence spans 68 residues: Metallothionein (68 aa).

The a divalent metal cation site is built by C7, C9, C14, C16, C20, C22, C25, C27, C35, C39, C40, C42, C43, C47, C50, C54, C56, C64, C66, and C67.

Belongs to the metallothionein superfamily. Type 1 family.

Metallothioneins have a high content of cysteine residues that bind various heavy metals. This chain is Metallothionein (mt), found in Scyliorhinus torazame (Cloudy catshark).